The chain runs to 205 residues: Histone H1, early embryonic (205 aa).

2 disordered regions span residues 1-21 (MAEK…HPPA) and 94-205 (AKAQ…AKSK). The H15 domain occupies 17-91 (AHPPAAEMVA…GASGSFKVNV (75 aa)). A compositionally biased stretch (basic and acidic residues) spans 98-124 (ASEKAKKEKEKAKLLAQREKAKEKGCS). 2 stretches are compositionally biased toward basic residues: residues 135–150 (PKKV…KPVK) and 157–205 (EKKK…AKSK).

Belongs to the histone H1/H5 family.

The protein resides in the nucleus. It localises to the chromosome. In terms of biological role, histones H1 are necessary for the condensation of nucleosome chains into higher-order structures. This chain is Histone H1, early embryonic, found in Strongylocentrotus purpuratus (Purple sea urchin).